The following is a 245-amino-acid chain: Orotidine 5'-phosphate decarboxylase (245 aa).

Residues aspartate 22, lysine 44, 71-80, threonine 131, arginine 192, glutamine 201, glycine 221, and arginine 222 each bind substrate; that span reads DLKFHDIPNT. The Proton donor role is filled by lysine 73.

It belongs to the OMP decarboxylase family. Type 1 subfamily. Homodimer.

The catalysed reaction is orotidine 5'-phosphate + H(+) = UMP + CO2. The protein operates within pyrimidine metabolism; UMP biosynthesis via de novo pathway; UMP from orotate: step 2/2. Functionally, catalyzes the decarboxylation of orotidine 5'-monophosphate (OMP) to uridine 5'-monophosphate (UMP). The sequence is that of Orotidine 5'-phosphate decarboxylase from Escherichia coli O81 (strain ED1a).